Consider the following 254-residue polypeptide: MSFKEIKSTLEDMDEQSRLSAAHDIMDDTRKNVKSLGKKILNAYEKKQNEIARVKKLYEFDKQFGNIVIAGVDEVGRGPLAGPIVGAAVILELNVEKDLDLILGINDSKKLSSKKRQELSEIIKEKALAWEIASLDNNEIDKKGISWCNNEIFKIAISKLKKVPELVISDGYAVKGIGIKNHYIVKGDAQSASIACASIIAKVYRDNLMGEYAKSYSEYGFESNVGYGSKDHIDAIKKFGTTPIHRMSFLKNII.

The 188-residue stretch at 67 to 254 (IVIAGVDEVG…HRMSFLKNII (188 aa)) folds into the RNase H type-2 domain. Positions 73, 74, and 170 each coordinate a divalent metal cation.

Belongs to the RNase HII family. It depends on Mn(2+) as a cofactor. Requires Mg(2+) as cofactor.

It localises to the cytoplasm. The catalysed reaction is Endonucleolytic cleavage to 5'-phosphomonoester.. Functionally, endonuclease that specifically degrades the RNA of RNA-DNA hybrids. In Clostridium acetobutylicum (strain ATCC 824 / DSM 792 / JCM 1419 / IAM 19013 / LMG 5710 / NBRC 13948 / NRRL B-527 / VKM B-1787 / 2291 / W), this protein is Ribonuclease HII.